A 446-amino-acid polypeptide reads, in one-letter code: Phosphoglucosamine mutase (446 aa).

Catalysis depends on serine 102, which acts as the Phosphoserine intermediate. 4 residues coordinate Mg(2+): serine 102, aspartate 241, aspartate 243, and aspartate 245. A Phosphoserine modification is found at serine 102.

The protein belongs to the phosphohexose mutase family. Mg(2+) is required as a cofactor. Post-translationally, activated by phosphorylation.

It catalyses the reaction alpha-D-glucosamine 1-phosphate = D-glucosamine 6-phosphate. Functionally, catalyzes the conversion of glucosamine-6-phosphate to glucosamine-1-phosphate. The polypeptide is Phosphoglucosamine mutase (Xylella fastidiosa (strain M23)).